A 184-amino-acid chain; its full sequence is NADH-quinone oxidoreductase subunit B 1 (184 aa).

[4Fe-4S] cluster-binding residues include Cys-37, Cys-38, Cys-103, and Cys-132.

Belongs to the complex I 20 kDa subunit family. NDH-1 is composed of 14 different subunits. Subunits NuoB, C, D, E, F, and G constitute the peripheral sector of the complex. Requires [4Fe-4S] cluster as cofactor.

The protein localises to the cell membrane. It catalyses the reaction a quinone + NADH + 5 H(+)(in) = a quinol + NAD(+) + 4 H(+)(out). NDH-1 shuttles electrons from NADH, via FMN and iron-sulfur (Fe-S) centers, to quinones in the respiratory chain. The immediate electron acceptor for the enzyme in this species is believed to be a menaquinone. Couples the redox reaction to proton translocation (for every two electrons transferred, four hydrogen ions are translocated across the cytoplasmic membrane), and thus conserves the redox energy in a proton gradient. The sequence is that of NADH-quinone oxidoreductase subunit B 1 from Streptomyces coelicolor (strain ATCC BAA-471 / A3(2) / M145).